The chain runs to 171 residues: Peptide deformylase (171 aa).

Fe cation is bound by residues cysteine 94 and histidine 136. Residue glutamate 137 is part of the active site. Histidine 140 provides a ligand contact to Fe cation.

This sequence belongs to the polypeptide deformylase family. Fe(2+) serves as cofactor.

It catalyses the reaction N-terminal N-formyl-L-methionyl-[peptide] + H2O = N-terminal L-methionyl-[peptide] + formate. Its function is as follows. Removes the formyl group from the N-terminal Met of newly synthesized proteins. Requires at least a dipeptide for an efficient rate of reaction. N-terminal L-methionine is a prerequisite for activity but the enzyme has broad specificity at other positions. The chain is Peptide deformylase from Afipia carboxidovorans (strain ATCC 49405 / DSM 1227 / KCTC 32145 / OM5) (Oligotropha carboxidovorans).